The following is a 195-amino-acid chain: Granulocyte colony-stimulating factor (195 aa).

Residues 1–21 (MKLMVLQLLLWHSALWTVHEA) form the signal peptide. Intrachain disulfides connect Cys57–Cys63 and Cys85–Cys95. Residue Thr154 is glycosylated (O-linked (GalNAc...) threonine).

This sequence belongs to the IL-6 superfamily. As to quaternary structure, monomer. O-glycosylated.

It is found in the secreted. Functionally, granulocyte/macrophage colony-stimulating factors are cytokines that act in hematopoiesis by controlling the production, differentiation, and function of 2 related white cell populations of the blood, the granulocytes and the monocytes-macrophages. This CSF induces granulocytes. The polypeptide is Granulocyte colony-stimulating factor (CSF3) (Bos taurus (Bovine)).